Reading from the N-terminus, the 450-residue chain is Bifunctional protein GlmU (450 aa).

Residues 1 to 236 (MTAHKPFSAV…AWEVSGVNNR (236 aa)) form a pyrophosphorylase region. Residues 12–15 (LAAG), lysine 26, glutamine 79, 84–85 (GT), 107–109 (YGD), glycine 147, glutamate 162, asparagine 177, and asparagine 234 contribute to the UDP-N-acetyl-alpha-D-glucosamine site. Residue aspartate 109 coordinates Mg(2+). Asparagine 234 contributes to the Mg(2+) binding site. The tract at residues 237 to 257 (AELASLESLWQNRKRQDVMKD) is linker. An N-acetyltransferase region spans residues 258 to 450 (GASLIAPETV…KKFRQRKKKK (193 aa)). Residues arginine 323 and lysine 341 each coordinate UDP-N-acetyl-alpha-D-glucosamine. Histidine 353 functions as the Proton acceptor in the catalytic mechanism. UDP-N-acetyl-alpha-D-glucosamine-binding residues include tyrosine 356 and asparagine 367. Acetyl-CoA-binding positions include 376 to 377 (NY), serine 395, alanine 413, and arginine 430.

It in the N-terminal section; belongs to the N-acetylglucosamine-1-phosphate uridyltransferase family. In the C-terminal section; belongs to the transferase hexapeptide repeat family. In terms of assembly, homotrimer. It depends on Mg(2+) as a cofactor.

It is found in the cytoplasm. The enzyme catalyses alpha-D-glucosamine 1-phosphate + acetyl-CoA = N-acetyl-alpha-D-glucosamine 1-phosphate + CoA + H(+). It catalyses the reaction N-acetyl-alpha-D-glucosamine 1-phosphate + UTP + H(+) = UDP-N-acetyl-alpha-D-glucosamine + diphosphate. Its pathway is nucleotide-sugar biosynthesis; UDP-N-acetyl-alpha-D-glucosamine biosynthesis; N-acetyl-alpha-D-glucosamine 1-phosphate from alpha-D-glucosamine 6-phosphate (route II): step 2/2. It participates in nucleotide-sugar biosynthesis; UDP-N-acetyl-alpha-D-glucosamine biosynthesis; UDP-N-acetyl-alpha-D-glucosamine from N-acetyl-alpha-D-glucosamine 1-phosphate: step 1/1. It functions in the pathway bacterial outer membrane biogenesis; LPS lipid A biosynthesis. Functionally, catalyzes the last two sequential reactions in the de novo biosynthetic pathway for UDP-N-acetylglucosamine (UDP-GlcNAc). The C-terminal domain catalyzes the transfer of acetyl group from acetyl coenzyme A to glucosamine-1-phosphate (GlcN-1-P) to produce N-acetylglucosamine-1-phosphate (GlcNAc-1-P), which is converted into UDP-GlcNAc by the transfer of uridine 5-monophosphate (from uridine 5-triphosphate), a reaction catalyzed by the N-terminal domain. The polypeptide is Bifunctional protein GlmU (Zymomonas mobilis subsp. mobilis (strain ATCC 31821 / ZM4 / CP4)).